The following is a 306-amino-acid chain: Acetaldehyde dehydrogenase (306 aa).

The active-site Acyl-thioester intermediate is the cysteine 131. NAD(+) contacts are provided by residues serine 162 to asparagine 170 and asparagine 273.

This sequence belongs to the acetaldehyde dehydrogenase family.

It carries out the reaction acetaldehyde + NAD(+) + CoA = acetyl-CoA + NADH + H(+). The polypeptide is Acetaldehyde dehydrogenase (Albidiferax ferrireducens (strain ATCC BAA-621 / DSM 15236 / T118) (Rhodoferax ferrireducens)).